The primary structure comprises 365 residues: GDSL esterase/lipase At3g62280 (365 aa).

An N-terminal signal peptide occupies residues 1-25; it reads MDYTVSSLQCFFLVLCLSLLVCSNS. Residue Ser43 is the Nucleophile of the active site. N-linked (GlcNAc...) asparagine glycosylation is found at Asn137, Asn178, and Asn231. Active-site residues include Asp333 and His336.

The protein belongs to the 'GDSL' lipolytic enzyme family.

The protein resides in the secreted. This is GDSL esterase/lipase At3g62280 from Arabidopsis thaliana (Mouse-ear cress).